Consider the following 273-residue polypeptide: Nicotinamide N-methyltransferase (273 aa).

Residues Tyr-35, Tyr-40, 74–75 (GA), Tyr-80, Asp-96, Asn-101, and 152–153 (NV) each bind S-adenosyl-L-methionine.

It belongs to the class I-like SAM-binding methyltransferase superfamily. NNMT/PNMT/TEMT family.

The catalysed reaction is nicotinamide + S-adenosyl-L-methionine = 1-methylnicotinamide + S-adenosyl-L-homocysteine. Functionally, catalyzes the N-methylation of nicotinamide and other pyridines to form pyridinium ions. Involved in regulation of lifespan extension downstream of the sirtuin sir-2.1, probably through its role in nicotinic acid metabolism. This Caenorhabditis elegans protein is Nicotinamide N-methyltransferase.